The sequence spans 274 residues: MGKGRAPCCDKTKVKRGPWSHDEDLKLISFIHKNGHENWRSLPKQAGLLRCGKSCRLRWINYLRPDVKRGNFSAEEEDTIIKLHQSFGNKWSKIASKLPGRTDNEIKNVWHTHLKKRLSSETNLNADEAGSKGSLNEEENSQESSPNASMSFAGSNISSKDDDAQISQMFEHILTYSEFTGMLQEVDKPELLEMPFDLDPDIWSFIDGSDSFQQPENRALQESEEDEVDKWFKHLESELGLEENDNQQQQQQHKQGTEDEHSSSLLESYELLIH.

HTH myb-type domains are found at residues 11–63 (KTKV…INYL) and 64–118 (RPDV…KKRL). 2 consecutive DNA-binding regions (H-T-H motif) follow at residues 39 to 63 (WRSL…INYL) and 91 to 114 (WSKI…HTHL). Disordered stretches follow at residues 121–160 (ETNL…ISSK) and 237–274 (SELG…LLIH). Residues 263 to 274 (SSLLESYELLIH) show a composition bias toward low complexity.

As to expression, expressed in leaves. Specifically expressed in fibers and vessels undergoing secondary wall thickening, especially in inflorescence stems.

It is found in the nucleus. Functionally, transcriptional activator that binds DNA to the AC cis-elements 5'-ACCTACC-3', 5'-ACCAACC-3' and 5'-ACCTAAC-3' of promoters and specifically activates lignin biosynthetic genes during secondary wall formation mediated by SND1. This is Transcription factor MYB58 from Arabidopsis thaliana (Mouse-ear cress).